We begin with the raw amino-acid sequence, 302 residues long: Galactofuranosyltransferase GlfT1 (302 aa).

The protein belongs to the glycosyltransferase 2 family.

The protein resides in the cell membrane. The protein localises to the secreted. It is found in the cell wall. The enzyme catalyses alpha-L-rhamnosyl-(1-&gt;3)-N-acetyl-alpha-D-glucosaminyl-diphospho-trans,octa-cis-decaprenol + 2 UDP-alpha-D-galactofuranose = beta-D-galactofuranosyl-(1-&gt;5)-beta-D-galactofuranosyl-(1-&gt;4)-alpha-L-rhamnosyl-(1-&gt;3)-N-acetyl-alpha-D-glucosaminyl-diphospho-trans,octa-cis-decaprenol + 2 UDP + 2 H(+). The protein operates within cell wall biogenesis; cell wall polysaccharide biosynthesis. In terms of biological role, involved in the biosynthesis of the arabinogalactan (AG) region of the mycolylarabinogalactan-peptidoglycan (mAGP) complex, an essential component of the mycobacterial cell wall. Catalyzes the transfer of the first two galactofuranosyl (Galf) units from UDP-galactofuranose (UDP-Galf) onto the rhamnosyl-GlcNAc-diphospho-decaprenol (Rha-GlcNAc-PP-C50) acceptor, yielding galactofuranosyl-galactofuranosyl-rhamnosyl-GlcNAc-diphospho-decaprenol (Galf-Galf-Rha-GlcNAc-PP-C50). Thus, GlfT1 is the initiator of galactan synthesis, while GlfT2 continues with the subsequent polymerization events. In Mycolicibacterium smegmatis (strain ATCC 700084 / mc(2)155) (Mycobacterium smegmatis), this protein is Galactofuranosyltransferase GlfT1.